The sequence spans 232 residues: Large ribosomal subunit protein uL1 (232 aa).

It belongs to the universal ribosomal protein uL1 family. As to quaternary structure, part of the 50S ribosomal subunit.

In terms of biological role, binds directly to 23S rRNA. The L1 stalk is quite mobile in the ribosome, and is involved in E site tRNA release. Its function is as follows. Protein L1 is also a translational repressor protein, it controls the translation of the L11 operon by binding to its mRNA. The chain is Large ribosomal subunit protein uL1 from Amoebophilus asiaticus (strain 5a2).